We begin with the raw amino-acid sequence, 317 residues long: 2,3-dihydroxyphenylpropionate/2,3-dihydroxicinnamic acid 1,2-dioxygenase 2 (317 aa).

The active-site Proton donor is the His115. His179 acts as the Proton acceptor in catalysis.

Belongs to the LigB/MhpB extradiol dioxygenase family. Homotetramer. It depends on Fe(2+) as a cofactor.

It catalyses the reaction 3-(2,3-dihydroxyphenyl)propanoate + O2 = (2Z,4E)-2-hydroxy-6-oxonona-2,4-dienedioate + H(+). The enzyme catalyses (2E)-3-(2,3-dihydroxyphenyl)prop-2-enoate + O2 = (2Z,4E,7E)-2-hydroxy-6-oxonona-2,4,7-trienedioate + H(+). It functions in the pathway aromatic compound metabolism; 3-phenylpropanoate degradation. Functionally, catalyzes the non-heme iron(II)-dependent oxidative cleavage of 2,3-dihydroxyphenylpropionic acid and 2,3-dihydroxicinnamic acid into 2-hydroxy-6-ketononadienedioate and 2-hydroxy-6-ketononatrienedioate, respectively. In Dechloromonas aromatica (strain RCB), this protein is 2,3-dihydroxyphenylpropionate/2,3-dihydroxicinnamic acid 1,2-dioxygenase 2.